Consider the following 511-residue polypeptide: NAD(P)H-quinone oxidoreductase subunit 2 B, chloroplastic (511 aa).

A run of 13 helical transmembrane segments spans residues 24–44, 57–77, 99–119, 124–144, 149–169, 183–203, 227–247, 295–315, 323–343, 354–374, 395–415, 418–438, and 484–504; these read LLLFHGSFIFPECILIFGLIL, IPWLYFISSTSLVMSIAALLF, IFQFLILLCSTLCIPLSVEYI, MAITEFLLFVLTATLGGMFLC, LITIFVAPECFSLCSYLLSGY, YLLMGGASSSILVHGFSWLYG, PGISIALIFITVGIGFKLSPA, WHLLLEILAILSMILGNLIAI, MLAYSSIGQIGYVIIGIIVGD, YMLFYISMNLGTFACIVLFGL, ALSLALCLLSLGGLPPLAGFF, LHLFWCGWQAGLYFLVSIGLL, and MIVCVIASTIPGISMNPIIAI.

It belongs to the complex I subunit 2 family. In terms of assembly, NDH is composed of at least 16 different subunits, 5 of which are encoded in the nucleus.

The protein localises to the plastid. The protein resides in the chloroplast thylakoid membrane. The catalysed reaction is a plastoquinone + NADH + (n+1) H(+)(in) = a plastoquinol + NAD(+) + n H(+)(out). It catalyses the reaction a plastoquinone + NADPH + (n+1) H(+)(in) = a plastoquinol + NADP(+) + n H(+)(out). In terms of biological role, NDH shuttles electrons from NAD(P)H:plastoquinone, via FMN and iron-sulfur (Fe-S) centers, to quinones in the photosynthetic chain and possibly in a chloroplast respiratory chain. The immediate electron acceptor for the enzyme in this species is believed to be plastoquinone. Couples the redox reaction to proton translocation, and thus conserves the redox energy in a proton gradient. In Nandina domestica (Heavenly bamboo), this protein is NAD(P)H-quinone oxidoreductase subunit 2 B, chloroplastic.